The following is a 36-amino-acid chain: Pancreatic polypeptide (36 aa).

At tyrosine 36 the chain carries Tyrosine amide.

The protein belongs to the NPY family.

The protein localises to the secreted. Its function is as follows. Hormone secreted by pancreatic cells that acts as a regulator of pancreatic and gastrointestinal functions. This Larus argentatus (Herring gull) protein is Pancreatic polypeptide (PPY).